We begin with the raw amino-acid sequence, 1409 residues long: DNA-directed RNA polymerase subunit beta' (1409 aa).

Residues Cys-70, Cys-72, Cys-85, and Cys-88 each contribute to the Zn(2+) site. Residues Asp-458, Asp-460, and Asp-462 each contribute to the Mg(2+) site. Zn(2+)-binding residues include Cys-813, Cys-887, Cys-894, and Cys-897.

It belongs to the RNA polymerase beta' chain family. The RNAP catalytic core consists of 2 alpha, 1 beta, 1 beta' and 1 omega subunit. When a sigma factor is associated with the core the holoenzyme is formed, which can initiate transcription. Mg(2+) is required as a cofactor. Zn(2+) serves as cofactor.

The enzyme catalyses RNA(n) + a ribonucleoside 5'-triphosphate = RNA(n+1) + diphosphate. Functionally, DNA-dependent RNA polymerase catalyzes the transcription of DNA into RNA using the four ribonucleoside triphosphates as substrates. The sequence is that of DNA-directed RNA polymerase subunit beta' from Delftia acidovorans (strain DSM 14801 / SPH-1).